The primary structure comprises 475 residues: Aspartyl/glutamyl-tRNA(Asn/Gln) amidotransferase subunit B (475 aa).

The protein belongs to the GatB/GatE family. GatB subfamily. Heterotrimer of A, B and C subunits.

It catalyses the reaction L-glutamyl-tRNA(Gln) + L-glutamine + ATP + H2O = L-glutaminyl-tRNA(Gln) + L-glutamate + ADP + phosphate + H(+). The enzyme catalyses L-aspartyl-tRNA(Asn) + L-glutamine + ATP + H2O = L-asparaginyl-tRNA(Asn) + L-glutamate + ADP + phosphate + 2 H(+). Its function is as follows. Allows the formation of correctly charged Asn-tRNA(Asn) or Gln-tRNA(Gln) through the transamidation of misacylated Asp-tRNA(Asn) or Glu-tRNA(Gln) in organisms which lack either or both of asparaginyl-tRNA or glutaminyl-tRNA synthetases. The reaction takes place in the presence of glutamine and ATP through an activated phospho-Asp-tRNA(Asn) or phospho-Glu-tRNA(Gln). This Staphylococcus carnosus (strain TM300) protein is Aspartyl/glutamyl-tRNA(Asn/Gln) amidotransferase subunit B.